The following is a 150-amino-acid chain: Large ribosomal subunit protein bL9 (150 aa).

This sequence belongs to the bacterial ribosomal protein bL9 family.

Binds to the 23S rRNA. This chain is Large ribosomal subunit protein bL9, found in Mycoplasma genitalium (strain ATCC 33530 / DSM 19775 / NCTC 10195 / G37) (Mycoplasmoides genitalium).